The primary structure comprises 346 residues: D-fructose 1,6-bisphosphatase class 2/sedoheptulose 1,7-bisphosphatase 1 (346 aa).

Positions 33, 57, 97, and 100 each coordinate Mn(2+). Residues Glu-100–Thr-102, Tyr-131, Arg-176–Arg-178, and Asp-198–Asp-200 contribute to the substrate site. Position 225 (Glu-225) interacts with Mn(2+).

The protein belongs to the FBPase class 2 family. In terms of assembly, homotetramer. The cofactor is Mn(2+).

It catalyses the reaction beta-D-fructose 1,6-bisphosphate + H2O = beta-D-fructose 6-phosphate + phosphate. The catalysed reaction is D-sedoheptulose 1,7-bisphosphate + H2O = D-sedoheptulose 7-phosphate + phosphate. Its pathway is carbohydrate biosynthesis; Calvin cycle. Its function is as follows. Catalyzes the hydrolysis of fructose 1,6-bisphosphate (Fru 1,6-P2) and sedoheptulose 1,7-bisphosphate (Sed 1,7-P2) to fructose 6-phosphate and sedoheptulose 7-phosphate, respectively. This is D-fructose 1,6-bisphosphatase class 2/sedoheptulose 1,7-bisphosphatase 1 from Acaryochloris marina (strain MBIC 11017).